Reading from the N-terminus, the 313-residue chain is Peptidyl-prolyl cis-trans isomerase 9 (313 aa).

The 166-residue stretch at 9-174 (FLDMALDEKP…AKVRIFNSGE (166 aa)) folds into the PPIase cyclophilin-type domain. Composition is skewed to basic and acidic residues over residues 216-230 (EERE…ESSR) and 253-269 (RGDR…KDDF). 2 disordered regions span residues 216-274 (EERE…IAVR) and 288-313 (TPEH…DLQP).

The protein belongs to the cyclophilin-type PPIase family.

The enzyme catalyses [protein]-peptidylproline (omega=180) = [protein]-peptidylproline (omega=0). Its function is as follows. PPIases accelerate the folding of proteins. It catalyzes the cis-trans isomerization of proline imid ic peptide bonds in oligopeptides. Thought to function as a catalyst in the folding and modification of cuticle collagens. The chain is Peptidyl-prolyl cis-trans isomerase 9 from Caenorhabditis briggsae.